We begin with the raw amino-acid sequence, 167 residues long: NAD(P)H-quinone oxidoreductase subunit I, chloroplastic (167 aa).

4Fe-4S ferredoxin-type domains follow at residues 55–84 (GRIH…VDWK) and 95–124 (LNYS…MTEE). 8 residues coordinate [4Fe-4S] cluster: Cys64, Cys67, Cys70, Cys74, Cys104, Cys107, Cys110, and Cys114.

The protein belongs to the complex I 23 kDa subunit family. In terms of assembly, NDH is composed of at least 16 different subunits, 5 of which are encoded in the nucleus. Requires [4Fe-4S] cluster as cofactor.

It is found in the plastid. It localises to the chloroplast thylakoid membrane. It catalyses the reaction a plastoquinone + NADH + (n+1) H(+)(in) = a plastoquinol + NAD(+) + n H(+)(out). It carries out the reaction a plastoquinone + NADPH + (n+1) H(+)(in) = a plastoquinol + NADP(+) + n H(+)(out). NDH shuttles electrons from NAD(P)H:plastoquinone, via FMN and iron-sulfur (Fe-S) centers, to quinones in the photosynthetic chain and possibly in a chloroplast respiratory chain. The immediate electron acceptor for the enzyme in this species is believed to be plastoquinone. Couples the redox reaction to proton translocation, and thus conserves the redox energy in a proton gradient. This chain is NAD(P)H-quinone oxidoreductase subunit I, chloroplastic, found in Pelargonium hortorum (Common geranium).